The primary structure comprises 638 residues: 1-deoxy-D-xylulose-5-phosphate synthase (638 aa).

Thiamine diphosphate-binding positions include H79 and 120 to 122; that span reads AHS. D151 provides a ligand contact to Mg(2+). Thiamine diphosphate is bound by residues 152 to 153, N180, Y289, and E371; that span reads GA. N180 serves as a coordination point for Mg(2+).

It belongs to the transketolase family. DXPS subfamily. In terms of assembly, homodimer. Mg(2+) serves as cofactor. It depends on thiamine diphosphate as a cofactor.

It carries out the reaction D-glyceraldehyde 3-phosphate + pyruvate + H(+) = 1-deoxy-D-xylulose 5-phosphate + CO2. Its pathway is metabolic intermediate biosynthesis; 1-deoxy-D-xylulose 5-phosphate biosynthesis; 1-deoxy-D-xylulose 5-phosphate from D-glyceraldehyde 3-phosphate and pyruvate: step 1/1. Its function is as follows. Catalyzes the acyloin condensation reaction between C atoms 2 and 3 of pyruvate and glyceraldehyde 3-phosphate to yield 1-deoxy-D-xylulose-5-phosphate (DXP). The protein is 1-deoxy-D-xylulose-5-phosphate synthase of Rhizobium leguminosarum bv. trifolii (strain WSM2304).